Here is a 145-residue protein sequence, read N- to C-terminus: Large ribosomal subunit protein bL9 (145 aa).

The protein belongs to the bacterial ribosomal protein bL9 family.

Binds to the 23S rRNA. The polypeptide is Large ribosomal subunit protein bL9 (Mesomycoplasma hyopneumoniae (strain 232) (Mycoplasma hyopneumoniae)).